The chain runs to 626 residues: DNA primase (626 aa).

The CHC2-type zinc finger occupies 39–63 (CPFHGEKTPSFSVSPEKQIFHCFGC). Positions 264–346 (EEITLMEGFM…DVFVLQLPAG (83 aa)) constitute a Toprim domain. Positions 270, 314, and 316 each coordinate Mg(2+).

This sequence belongs to the DnaG primase family. As to quaternary structure, monomer. Interacts with DnaB. Zn(2+) serves as cofactor. The cofactor is Mg(2+).

It catalyses the reaction ssDNA + n NTP = ssDNA/pppN(pN)n-1 hybrid + (n-1) diphosphate.. RNA polymerase that catalyzes the synthesis of short RNA molecules used as primers for DNA polymerase during DNA replication. This Listeria innocua serovar 6a (strain ATCC BAA-680 / CLIP 11262) protein is DNA primase.